A 306-amino-acid polypeptide reads, in one-letter code: Large ribosomal subunit protein uL2m (306 aa).

The N-terminal 60 residues, 1–60, are a transit peptide targeting the mitochondrion; the sequence is MALRVVTRALGSLSLTPRIAAVPGPSLLPAAQVTNNVLLQLPSASMLLPSRPLLTSVALS.

This sequence belongs to the universal ribosomal protein uL2 family. In terms of assembly, component of the mitochondrial ribosome large subunit (39S) which comprises a 16S rRNA and about 50 distinct proteins.

The protein localises to the mitochondrion. The chain is Large ribosomal subunit protein uL2m (MRPL2) from Bos taurus (Bovine).